The primary structure comprises 127 residues: Fatty acid-binding protein, liver (127 aa).

N-acetylmethionine is present on Met-1. At Ser-11 the chain carries Phosphoserine. Residues Lys-31 and Lys-36 each carry the N6-succinyllysine modification. The residue at position 39 (Ser-39) is a Phosphoserine. Lys-46 carries the post-translational modification N6-succinyllysine. Thr-51 is subject to Phosphothreonine. An N6-succinyllysine mark is found at Lys-57 and Lys-78. Lys-84 carries the N6-acetyllysine; alternate modification. Lys-84 bears the N6-succinyllysine; alternate mark. The residue at position 90 (Lys-90) is an N6-succinyllysine. At Ser-100 the chain carries Phosphoserine. N6-succinyllysine is present on Lys-121.

Belongs to the calycin superfamily. Fatty-acid binding protein (FABP) family.

It is found in the cytoplasm. Its function is as follows. Plays a role in lipoprotein-mediated cholesterol uptake in hepatocytes. Binds cholesterol. Binds free fatty acids and their coenzyme A derivatives, bilirubin, and some other small molecules in the cytoplasm. May be involved in intracellular lipid transport. The protein is Fatty acid-binding protein, liver (Fabp1) of Mus musculus (Mouse).